The primary structure comprises 380 residues: Queuine tRNA-ribosyltransferase (380 aa).

Asp-96 functions as the Proton acceptor in the catalytic mechanism. Substrate-binding positions include 96-100 (DSGGF), Asp-150, Gln-193, and Gly-220. The segment at 251 to 257 (GVGAPDS) is RNA binding. Asp-270 functions as the Nucleophile in the catalytic mechanism. Positions 275-279 (TRIAR) are RNA binding; important for wobble base 34 recognition. Residues Cys-308, Cys-310, Cys-313, and His-339 each contribute to the Zn(2+) site.

The protein belongs to the queuine tRNA-ribosyltransferase family. In terms of assembly, homodimer. Within each dimer, one monomer is responsible for RNA recognition and catalysis, while the other monomer binds to the replacement base PreQ1. It depends on Zn(2+) as a cofactor.

The enzyme catalyses 7-aminomethyl-7-carbaguanine + guanosine(34) in tRNA = 7-aminomethyl-7-carbaguanosine(34) in tRNA + guanine. The protein operates within tRNA modification; tRNA-queuosine biosynthesis. Functionally, catalyzes the base-exchange of a guanine (G) residue with the queuine precursor 7-aminomethyl-7-deazaguanine (PreQ1) at position 34 (anticodon wobble position) in tRNAs with GU(N) anticodons (tRNA-Asp, -Asn, -His and -Tyr). Catalysis occurs through a double-displacement mechanism. The nucleophile active site attacks the C1' of nucleotide 34 to detach the guanine base from the RNA, forming a covalent enzyme-RNA intermediate. The proton acceptor active site deprotonates the incoming PreQ1, allowing a nucleophilic attack on the C1' of the ribose to form the product. After dissociation, two additional enzymatic reactions on the tRNA convert PreQ1 to queuine (Q), resulting in the hypermodified nucleoside queuosine (7-(((4,5-cis-dihydroxy-2-cyclopenten-1-yl)amino)methyl)-7-deazaguanosine). In Streptococcus uberis (strain ATCC BAA-854 / 0140J), this protein is Queuine tRNA-ribosyltransferase.